The chain runs to 1444 residues: DNA polymerase III PolC-type (1444 aa).

The Exonuclease domain occupies 428–584 (YCVFDVETTG…FDAEATAYLA (157 aa)).

This sequence belongs to the DNA polymerase type-C family. PolC subfamily.

It localises to the cytoplasm. The catalysed reaction is DNA(n) + a 2'-deoxyribonucleoside 5'-triphosphate = DNA(n+1) + diphosphate. Required for replicative DNA synthesis. This DNA polymerase also exhibits 3' to 5' exonuclease activity. This chain is DNA polymerase III PolC-type, found in Listeria innocua serovar 6a (strain ATCC BAA-680 / CLIP 11262).